Reading from the N-terminus, the 1356-residue chain is DNA-directed RNA polymerase subunit beta (1356 aa).

It belongs to the RNA polymerase beta chain family. In terms of assembly, the RNAP catalytic core consists of 2 alpha, 1 beta, 1 beta' and 1 omega subunit. When a sigma factor is associated with the core the holoenzyme is formed, which can initiate transcription.

It catalyses the reaction RNA(n) + a ribonucleoside 5'-triphosphate = RNA(n+1) + diphosphate. Its function is as follows. DNA-dependent RNA polymerase catalyzes the transcription of DNA into RNA using the four ribonucleoside triphosphates as substrates. The chain is DNA-directed RNA polymerase subunit beta from Stutzerimonas stutzeri (strain A1501) (Pseudomonas stutzeri).